A 176-amino-acid polypeptide reads, in one-letter code: Late lactation protein A (176 aa).

Positions 1-18 (MRVLFLTISLSLFSIIHA) are cleaved as a signal peptide. Cys-78 and Cys-171 are joined by a disulfide.

Belongs to the calycin superfamily. Lipocalin family. As to expression, mammary gland specific. Secreted in milk.

It localises to the secreted. Probably serves a role in the transport of a small ligand released during the hydrolysis of milk fat. The sequence is that of Late lactation protein A (LLPA) from Notamacropus eugenii (Tammar wallaby).